The following is a 272-amino-acid chain: Putative pyruvate, phosphate dikinase regulatory protein (272 aa).

154–161 provides a ligand contact to ADP; sequence GVSRTSKS.

Belongs to the pyruvate, phosphate/water dikinase regulatory protein family. PDRP subfamily.

It carries out the reaction N(tele)-phospho-L-histidyl/L-threonyl-[pyruvate, phosphate dikinase] + ADP = N(tele)-phospho-L-histidyl/O-phospho-L-threonyl-[pyruvate, phosphate dikinase] + AMP + H(+). The catalysed reaction is N(tele)-phospho-L-histidyl/O-phospho-L-threonyl-[pyruvate, phosphate dikinase] + phosphate + H(+) = N(tele)-phospho-L-histidyl/L-threonyl-[pyruvate, phosphate dikinase] + diphosphate. Functionally, bifunctional serine/threonine kinase and phosphorylase involved in the regulation of the pyruvate, phosphate dikinase (PPDK) by catalyzing its phosphorylation/dephosphorylation. This chain is Putative pyruvate, phosphate dikinase regulatory protein, found in Wolbachia sp. subsp. Brugia malayi (strain TRS).